Consider the following 601-residue polypeptide: Testis-specific gene 10 protein (601 aa).

A compositionally biased stretch (basic residues) spans 1–10 (MMRSRSKSPR). 2 disordered regions span residues 1–20 (MMRS…RGAN) and 563–588 (VSST…DRGL). Residues 459 to 592 (QMTNERISMQ…SPDRGLDRSL (134 aa)) form an interaction with HIF1A region. Residues 563-573 (VSSTMKPNTKC) show a composition bias toward polar residues. The segment covering 574–588 (HSPERAHHRSPDRGL) has biased composition (basic and acidic residues). Residue Ser-591 is modified to Phosphoserine.

It belongs to the CEP135/TSGA10 family. As to quaternary structure, interacts with HIF1A. Post-translationally, processed into N-terminal 27-kDa and C-terminal 55-kDa fragments.

The protein resides in the cytoplasm. It is found in the cytoskeleton. Its subcellular location is the microtubule organizing center. The protein localises to the centrosome. It localises to the centriole. In terms of biological role, plays a role in spermatogenesis. When overexpressed, prevents nuclear localization of HIF1A. This Macaca fascicularis (Crab-eating macaque) protein is Testis-specific gene 10 protein (TSGA10).